The sequence spans 1013 residues: Antigenic heat-stable 120 kDa protein (1013 aa).

Disordered stretches follow at residues 1–73 (DTSE…TSDP) and 348–396 (GQSK…PQSQ). Over residues 12-27 (EYTEEQKQKLEQEQKE) the composition is skewed to basic and acidic residues. Residues 47 to 61 (SASSAQSTPSISALS) are compositionally biased toward low complexity. 3 stretches are compositionally biased toward polar residues: residues 62 to 73 (GNISPDSQTSDP), 348 to 373 (GQSKEQPLITPQQTASSSVESPQYKQ), and 380 to 396 (PTNQPLQPETSQMPQSQ).

It is found in the cytoplasm. In Rickettsia rhipicephali, this protein is Antigenic heat-stable 120 kDa protein (sca4).